The sequence spans 200 residues: Probable nicotinate-nucleotide adenylyltransferase (200 aa).

The protein belongs to the NadD family.

It catalyses the reaction nicotinate beta-D-ribonucleotide + ATP + H(+) = deamido-NAD(+) + diphosphate. It functions in the pathway cofactor biosynthesis; NAD(+) biosynthesis; deamido-NAD(+) from nicotinate D-ribonucleotide: step 1/1. In terms of biological role, catalyzes the reversible adenylation of nicotinate mononucleotide (NaMN) to nicotinic acid adenine dinucleotide (NaAD). In Clostridium tetani (strain Massachusetts / E88), this protein is Probable nicotinate-nucleotide adenylyltransferase.